The following is a 481-amino-acid chain: Coniferyl aldehyde dehydrogenase (481 aa).

Catalysis depends on residues glutamate 221 and cysteine 255.

This sequence belongs to the aldehyde dehydrogenase family. In terms of assembly, homodimer.

It carries out the reaction (E)-coniferaldehyde + NADP(+) + H2O = (E)-ferulate + NADPH + 2 H(+). The catalysed reaction is (E)-coniferaldehyde + NAD(+) + H2O = (E)-ferulate + NADH + 2 H(+). Functionally, catalyzes the NAD(+)-dependent oxidation of coniferyl aldehyde to ferulic acid and which is induced during growth with eugenol as the carbon source. The polypeptide is Coniferyl aldehyde dehydrogenase (calB) (Pseudomonas sp. (strain HR199 / DSM 7063)).